The following is a 163-amino-acid chain: 6,7-dimethyl-8-ribityllumazine synthase 1 (163 aa).

Residues F27, 58 to 60, and 87 to 89 contribute to the 5-amino-6-(D-ribitylamino)uracil site; these read ALE and CVV. 92–93 is a binding site for (2S)-2-hydroxy-3-oxobutyl phosphate; that stretch reads ET. The Proton donor role is filled by H95. N120 provides a ligand contact to 5-amino-6-(D-ribitylamino)uracil. R134 is a (2S)-2-hydroxy-3-oxobutyl phosphate binding site.

This sequence belongs to the DMRL synthase family.

It carries out the reaction (2S)-2-hydroxy-3-oxobutyl phosphate + 5-amino-6-(D-ribitylamino)uracil = 6,7-dimethyl-8-(1-D-ribityl)lumazine + phosphate + 2 H2O + H(+). It participates in cofactor biosynthesis; riboflavin biosynthesis; riboflavin from 2-hydroxy-3-oxobutyl phosphate and 5-amino-6-(D-ribitylamino)uracil: step 1/2. Catalyzes the formation of 6,7-dimethyl-8-ribityllumazine by condensation of 5-amino-6-(D-ribitylamino)uracil with 3,4-dihydroxy-2-butanone 4-phosphate. This is the penultimate step in the biosynthesis of riboflavin. In Rhodopseudomonas palustris (strain ATCC BAA-98 / CGA009), this protein is 6,7-dimethyl-8-ribityllumazine synthase 1.